Reading from the N-terminus, the 475-residue chain is UDP-N-acetylmuramate--L-alanine ligase (475 aa).

Residue G119–T125 coordinates ATP.

This sequence belongs to the MurCDEF family.

It is found in the cytoplasm. The catalysed reaction is UDP-N-acetyl-alpha-D-muramate + L-alanine + ATP = UDP-N-acetyl-alpha-D-muramoyl-L-alanine + ADP + phosphate + H(+). Its pathway is cell wall biogenesis; peptidoglycan biosynthesis. Functionally, cell wall formation. The protein is UDP-N-acetylmuramate--L-alanine ligase of Wigglesworthia glossinidia brevipalpis.